The primary structure comprises 366 residues: ERCC4 domain-containing protein EP364R (366 aa).

Residues 3 to 101 (FLVADHREHH…QLYFFVEGPA (99 aa)) enclose the ERCC4 domain.

It belongs to the asfivirus EP364R family.

In terms of biological role, plays a role in the inhibition of type I interferon signaling pathway. Mechanistically, specifically interacts with 2',3'-cGAMP and cleaves it via its phosphodiesterase activity. In turn, prevents 2',3'-cGAMP interaction with host ER-resident STING1 leading to inhibition of downstream signaling pathway and type I interferon production. The sequence is that of ERCC4 domain-containing protein EP364R from African swine fever virus (isolate Pig/Kenya/KEN-50/1950) (ASFV).